A 266-amino-acid chain; its full sequence is MASFVESGWQYLVTHFSDFQLACIGSFLLHESVFFLSGLPFIFLERQGFLSKYKIQTKNNTPAAQGKCITRLLLYHFSVNLPLMLASYPVFRAMGMRSSFPLPSWKEVSAQILFYFIIEDFVFYWGHRILHSKWLYKNVHSVHHEYATPFGLTSEYAHPAEILFLGFATIVGPALTGPHLITLWLWMVLRVLETVEAHCGYHFPWSLSNFLPLYGGADFHDYHHRLLYTKSGNYSSTFVYMDWIFGTDKGYRRLKTLKENGDMKQT.

A run of 3 helical transmembrane segments spans residues 24-44 (IGSF…FIFL), 71-91 (RLLL…YPVF), and 107-127 (EVSA…YWGH). Residues 113–247 (LFYFIIEDFV…FVYMDWIFGT (135 aa)) enclose the Fatty acid hydroxylase domain. The Histidine box-1 signature appears at 127 to 131 (HRILH). The Histidine box-2 signature appears at 140 to 144 (HSVHH). The helical transmembrane segment at 162–182 (ILFLGFATIVGPALTGPHLIT) threads the bilayer. The Histidine box-3 signature appears at 219-225 (FHDYHHR).

The protein belongs to the sterol desaturase family. Requires Fe cation as cofactor. Expressed in shoots, roots, siliques and flowers, and, slightly, in developing seeds.

The protein resides in the endoplasmic reticulum membrane. It carries out the reaction 4,4-dimethyl-5alpha-cholest-7-en-3beta-ol + 6 Fe(II)-[cytochrome b5] + 3 O2 + 5 H(+) = 4alpha-carboxy-4beta-methyl-5alpha-cholest-7-ene-3beta-ol + 6 Fe(III)-[cytochrome b5] + 4 H2O. The enzyme catalyses 24-methylidenelophenol + 6 Fe(II)-[cytochrome b5] + 3 O2 + 5 H(+) = 4alpha-carboxy-ergosta-7,24(24(1))-dien-3beta-ol + 6 Fe(III)-[cytochrome b5] + 4 H2O. Non-heme iron oxygenase involved in sterols biosynthesis by catalyzing the removal of the second methyl group at the C-4 position. 24-ethylidenelophenol and 24-ethyllophenol are the preferred substrates. Together with SMO2-1, required during embryogenesis, probably by maintaining sterols and auxin homeostasis. The sequence is that of Methylsterol monooxygenase 2-2 from Arabidopsis thaliana (Mouse-ear cress).